Consider the following 117-residue polypeptide: Mediator of RNA polymerase II transcription subunit 11 (117 aa).

Ala2 is subject to N-acetylalanine.

It belongs to the Mediator complex subunit 11 family. In terms of assembly, component of the Mediator complex, which is composed of MED1, MED4, MED6, MED7, MED8, MED9, MED10, MED11, MED12, MED13, MED13L, MED14, MED15, MED16, MED17, MED18, MED19, MED20, MED21, MED22, MED23, MED24, MED25, MED26, MED27, MED29, MED30, MED31, CCNC, CDK8 and CDC2L6/CDK11. The MED12, MED13, CCNC and CDK8 subunits form a distinct module termed the CDK8 module. Mediator containing the CDK8 module is less active than Mediator lacking this module in supporting transcriptional activation. Individual preparations of the Mediator complex lacking one or more distinct subunits have been variously termed ARC, CRSP, DRIP, PC2, SMCC and TRAP. As to expression, expressed in cochlea.

It is found in the nucleus. Functionally, component of the Mediator complex, a coactivator involved in the regulated transcription of nearly all RNA polymerase II-dependent genes. Mediator functions as a bridge to convey information from gene-specific regulatory proteins to the basal RNA polymerase II transcription machinery. Mediator is recruited to promoters by direct interactions with regulatory proteins and serves as a scaffold for the assembly of a functional pre-initiation complex with RNA polymerase II and the general transcription factors. This Mus musculus (Mouse) protein is Mediator of RNA polymerase II transcription subunit 11 (Med11).